Here is a 359-residue protein sequence, read N- to C-terminus: Nicotinate-nucleotide--dimethylbenzimidazole phosphoribosyltransferase (359 aa).

Glu-318 acts as the Proton acceptor in catalysis.

This sequence belongs to the CobT family. As to quaternary structure, homodimer.

The catalysed reaction is 5,6-dimethylbenzimidazole + nicotinate beta-D-ribonucleotide = alpha-ribazole 5'-phosphate + nicotinate + H(+). It participates in nucleoside biosynthesis; alpha-ribazole biosynthesis; alpha-ribazole from 5,6-dimethylbenzimidazole: step 1/2. Its function is as follows. Catalyzes the synthesis of alpha-ribazole-5'-phosphate from nicotinate mononucleotide (NAMN) and 5,6-dimethylbenzimidazole (DMB). This is Nicotinate-nucleotide--dimethylbenzimidazole phosphoribosyltransferase from Escherichia coli (strain ATCC 8739 / DSM 1576 / NBRC 3972 / NCIMB 8545 / WDCM 00012 / Crooks).